The chain runs to 923 residues: Alanine--tRNA ligase (923 aa).

4 residues coordinate Zn(2+): histidine 611, histidine 615, cysteine 714, and histidine 718. Residues 886-903 show a composition bias toward gly residues; sequence VGGGGGGRPNMARGGGTD. The interval 886–909 is disordered; it reads VGGGGGGRPNMARGGGTDPSGMDN.

This sequence belongs to the class-II aminoacyl-tRNA synthetase family. It depends on Zn(2+) as a cofactor.

Its subcellular location is the cytoplasm. The catalysed reaction is tRNA(Ala) + L-alanine + ATP = L-alanyl-tRNA(Ala) + AMP + diphosphate. Its function is as follows. Catalyzes the attachment of alanine to tRNA(Ala) in a two-step reaction: alanine is first activated by ATP to form Ala-AMP and then transferred to the acceptor end of tRNA(Ala). Also edits incorrectly charged Ser-tRNA(Ala) and Gly-tRNA(Ala) via its editing domain. The protein is Alanine--tRNA ligase of Methanococcoides burtonii (strain DSM 6242 / NBRC 107633 / OCM 468 / ACE-M).